An 89-amino-acid chain; its full sequence is U-scoloptoxin(11)-Sm4a (89 aa).

A signal peptide spans Met-1–Ser-17.

The protein belongs to the scoloptoxin-11 family. Post-translationally, contains 3 disulfide bonds. Expressed by the venom gland.

The protein resides in the secreted. The polypeptide is U-scoloptoxin(11)-Sm4a (Scolopendra morsitans (Tanzanian blue ringleg centipede)).